The sequence spans 274 residues: Thiamine kinase (274 aa).

It belongs to the thiamine kinase family.

It catalyses the reaction thiamine + ATP = thiamine phosphate + ADP + H(+). It functions in the pathway cofactor biosynthesis; thiamine diphosphate biosynthesis; thiamine phosphate from thiamine: step 1/1. In terms of biological role, catalyzes the ATP-dependent phosphorylation of thiamine to thiamine phosphate. Is involved in thiamine salvage. The sequence is that of Thiamine kinase from Escherichia coli O17:K52:H18 (strain UMN026 / ExPEC).